The following is a 284-amino-acid chain: Averufin oxidase A (284 aa).

The N-terminal stretch at 1–23 (MPTYALLGATGATGSAILRCLLA) is a signal peptide. Residues Asn-62, Asn-86, and Asn-190 are each glycosylated (N-linked (GlcNAc...) asparagine).

The protein belongs to the avfA family.

Its pathway is mycotoxin biosynthesis. Averufin oxidase A; part of the fragmented gene cluster that mediates the biosynthesis of dothistromin (DOTH), a polyketide toxin very similar in structure to the aflatoxin precursor, versicolorin B. The first step of the pathway is the conversion of acetate to norsolorinic acid (NOR) and requires the fatty acid synthase subunits hexA and hexB, as well as the polyketide synthase pksA. PksA combines a hexanoyl starter unit and 7 malonyl-CoA extender units to synthesize the precursor NOR. The hexanoyl starter unit is provided to the acyl-carrier protein (ACP) domain by the fungal fatty acid synthase hexA/hexB. The second step is the conversion of NOR to averantin (AVN) and requires the norsolorinic acid ketoreductase nor1, which catalyzes the dehydration of norsolorinic acid to form (1'S)-averantin. The cytochrome P450 monooxygenase avnA then catalyzes the hydroxylation of AVN to 5'hydroxyaverantin (HAVN). The next step is performed by adhA that transforms HAVN to averufin (AVF). Averufin might then be converted to hydroxyversicolorone by cypX and avfA. Hydroxyversicolorone is further converted versiconal hemiacetal acetate (VHA) by moxY. VHA is then the substrate for the versiconal hemiacetal acetate esterase est1 to yield versiconal (VAL). Versicolorin B synthase vbsA then converts VAL to versicolorin B (VERB) by closing the bisfuran ring. Then, the activity of the versicolorin B desaturase verB leads to versicolorin A (VERA). DotB, a predicted chloroperoxidase, may perform epoxidation of the A-ring of VERA. Alternatively, a cytochrome P450, such as cypX or avnA could catalyze this step. It is also possible that another, uncharacterized, cytochrome P450 enzyme is responsible for this step. Opening of the epoxide could potentially be achieved by the epoxide hydrolase epoA. However, epoA seems not to be required for DOTH biosynthesis, but other epoxide hydrolases may have the ability to complement this hydrolysis. Alternatively, opening of the epoxide ring could be achieved non-enzymatically. The next step is the deoxygenation of ring A to yield the 5,8-dihydroxyanthraquinone which is most likely catalyzed by the NADPH dehydrogenase encoded by ver1. The last stages of DOTH biosynthesis are proposed to involve hydroxylation of the bisfuran. OrdB and norB might have oxidative roles here. An alternative possibility is that cytochrome P450 monoogenases such as avnA and cypX might perform these steps in addition to previously proposed steps. The protein is Averufin oxidase A of Dothistroma septosporum (strain NZE10 / CBS 128990) (Red band needle blight fungus).